Consider the following 387-residue polypeptide: Ubiquitin-conjugating enzyme E2 25 (387 aa).

The tract at residues 117-164 (APPVRDDIDEGRGSDISDTTSEPIDDDMAGDGEVDDDDEEEEDDEDAD) is disordered. The span at 120–131 (VRDDIDEGRGSD) shows a compositional bias: basic and acidic residues. Acidic residues predominate over residues 139-164 (PIDDDMAGDGEVDDDDEEEEDDEDAD). The UBC core domain maps to 214–380 (TATDRLMKEI…QQIHAKSGWY (167 aa)). Catalysis depends on C315, which acts as the Glycyl thioester intermediate.

This sequence belongs to the ubiquitin-conjugating enzyme family. In terms of tissue distribution, in the embryo, expressed in precursor neuron and muscle cells and in other cells such as hypodermal cells. After hatching of L1 larvae and in all subsequent stages, strongest expression in pharyngeal muscle and anal muscle cells. In L4 larvae and adolescent hermaphrodites, also expressed in the vulval muscles. Expression also detected in all four nerve cords and in neurons with weaker levels in all body wall muscles.

It localises to the cytoplasm. It is found in the nucleus. It carries out the reaction S-ubiquitinyl-[E1 ubiquitin-activating enzyme]-L-cysteine + [E2 ubiquitin-conjugating enzyme]-L-cysteine = [E1 ubiquitin-activating enzyme]-L-cysteine + S-ubiquitinyl-[E2 ubiquitin-conjugating enzyme]-L-cysteine.. Its pathway is protein modification; protein ubiquitination. Its function is as follows. Catalyzes the covalent attachment of ubiquitin to other proteins (Potential). Required for the maintenance of neuromuscular function. This is Ubiquitin-conjugating enzyme E2 25 from Caenorhabditis elegans.